Consider the following 239-residue polypeptide: Transcriptional regulatory protein BtsR (239 aa).

A Response regulatory domain is found at 3 to 116; sequence KVLIVDDEPL…RLEKTLARLR (114 aa). The residue at position 54 (D54) is a 4-aspartylphosphate. Positions 137-239 constitute an HTH LytTR-type domain; it reads IPCTGHSRIY…LKSLKEAIGL (103 aa).

Phosphorylated by BtsS.

In terms of biological role, member of the two-component regulatory system BtsS/BtsR. BtsR regulates expression of btsT by binding to its promoter region. The polypeptide is Transcriptional regulatory protein BtsR (Escherichia coli O6:H1 (strain CFT073 / ATCC 700928 / UPEC)).